The sequence spans 95 residues: MTDESMSYREKAYALLQADAEKIIQLIRVQMDHLTMPQCPVYEEVLDTQMFGLSREIDFAVRLGLVEAKDGKALLDRLERELSTLHEAVAKKRVR.

Belongs to the UPF0358 family.

This Geobacillus kaustophilus (strain HTA426) protein is UPF0358 protein GK1077.